The following is an 858-amino-acid chain: MSSLSTSFDSSSDLPRSKSVDNTAASMKTGKYPKLENYRQYSDAQPIRHEALALKVDETKDSRHKFSSSNGENSGVENGGYVEKTNISTSGRMDFEGEAEAEAVKRYQLRSFALLSSNARPSRLAKSETHQKQIHVESIAPSLPKNAALERGHDTALPAGTSSNRCNLEASSSARTFTSARKASLVSAIFETSAESEHGTHPKQAKLKRRTYSTISTHSSVNPTTLLTRTASQKSDMGNDTRRIKPLRMDSRVSFHSEISQASRDSQETEEDVCFPMFRLLHTRVNGVDFDELEEYAQISNAERNLSLANHQRHSERTYNHTDQDTGFTNSASTSGSSAALKYTPEISRTLEKNCSVNEMYVSENNESVREDDKPDLHPDVTFGRNKIEGEKEGNDSSYSRAYYTLQNTEYQIPSRFSFFRSESDETVHASDIPSLISEGQTFYELFKGGDPTWWLDCSCPTDDEMRCIAKTFGIHPLTAEDIRMQETREKVELFKSYYFVCFHTFENDKESENYLEPINVYIVVFRSGVLTFHFDPISHCANVRRRVRQLRDYVSVNSDWLCYALIDDITDSFAPVIQSIEYEADSIDDSVFMTRDMDFAAMLQRIGESRRKTMTLMRLLSGKADVIKMFAKRCQDETNGIGPVLKSQTNMVNLQAEQENVNQNNSNNQISLSNSYMQTTSQPRGDIALYLGDIQDHLLTMFQNLLAYEKIFSRSHANYLAQLQVESFNSNNKVTEMLGKVTMLGTMLVPLNVITGLFGMNVKVPGRNGSIAWWYGILGVLLLLAVISWFLASYWIKKIDPPATLNEAAGSGAKSVISSFLPKRDKRFNDDSKNGNARVGVRRKSTVSLPSRYSRYN.

The span at 1–14 shows a compositional bias: low complexity; it reads MSSLSTSFDSSSDL. Disordered regions lie at residues 1–81, 318–337, and 365–396; these read MSSL…NGGY, TYNH…TSGS, and NNES…EGND. The Cytoplasmic segment spans residues 1-741; sequence MSSLSTSFDS…NNKVTEMLGK (741 aa). Residues 46–61 show a composition bias toward basic and acidic residues; the sequence is PIRHEALALKVDETKD. Over residues 67–81 the composition is skewed to low complexity; that stretch reads SSSNGENSGVENGGY. Basic and acidic residues-rich tracts occupy residues 367–379 and 386–395; these read ESVR…DLHP and NKIEGEKEGN. A helical transmembrane segment spans residues 742 to 762; that stretch reads VTMLGTMLVPLNVITGLFGMN. Residues 763–771 are Extracellular-facing; that stretch reads VKVPGRNGS. A helical transmembrane segment spans residues 772–792; the sequence is IAWWYGILGVLLLLAVISWFL. The Cytoplasmic portion of the chain corresponds to 793–858; sequence ASYWIKKIDP…SLPSRYSRYN (66 aa).

Belongs to the CorA metal ion transporter (MIT) (TC 1.A.35) family.

The protein resides in the cell membrane. In terms of biological role, plasma membrane magnesium transporter. The sequence is that of Magnesium transporter ALR2 (ALR2) from Saccharomyces cerevisiae (strain ATCC 204508 / S288c) (Baker's yeast).